Here is a 297-residue protein sequence, read N- to C-terminus: Ribosomal RNA small subunit methyltransferase H (297 aa).

S-adenosyl-L-methionine contacts are provided by residues 30–32 (GGY), Asp48, Phe75, Asp96, and Gln103.

The protein belongs to the methyltransferase superfamily. RsmH family.

The protein localises to the cytoplasm. The enzyme catalyses cytidine(1402) in 16S rRNA + S-adenosyl-L-methionine = N(4)-methylcytidine(1402) in 16S rRNA + S-adenosyl-L-homocysteine + H(+). Functionally, specifically methylates the N4 position of cytidine in position 1402 (C1402) of 16S rRNA. The protein is Ribosomal RNA small subunit methyltransferase H of Ehrlichia chaffeensis (strain ATCC CRL-10679 / Arkansas).